The following is a 315-amino-acid chain: Glutamyl-Q tRNA(Asp) synthetase (315 aa).

L-glutamate-binding positions include 12-16 (RFAPS) and E48. The short motif at 15–25 (PSPSGPLHFGS) is the 'HIGH' region element. 4 residues coordinate Zn(2+): C104, C106, Y124, and C128. Residues Y181 and R199 each contribute to the L-glutamate site. The 'KMSKS' region motif lies at 237-241 (KLSKQ). An ATP-binding site is contributed by K240.

Belongs to the class-I aminoacyl-tRNA synthetase family. GluQ subfamily. Zn(2+) serves as cofactor.

Functionally, catalyzes the tRNA-independent activation of glutamate in presence of ATP and the subsequent transfer of glutamate onto a tRNA(Asp). Glutamate is transferred on the 2-amino-5-(4,5-dihydroxy-2-cyclopenten-1-yl) moiety of the queuosine in the wobble position of the QUC anticodon. The polypeptide is Glutamyl-Q tRNA(Asp) synthetase (Aromatoleum aromaticum (strain DSM 19018 / LMG 30748 / EbN1) (Azoarcus sp. (strain EbN1))).